Reading from the N-terminus, the 431-residue chain is MQLNSNGWHVDDHIVVAVSTGIDSMCLLYQLLNDYKDSYRKLTCLHVNHGVRSASIEEARFLEAYCERHHIDLHIKKLDLSHSLDRNNSIQNEARIKRYEWFDEMMNVLEADVLLTAHHLDDQLETIMYRIFNGKSTRNKLGFDELSKRKGYQIYRPLLAVSKKEIKQFQERYHIPYFEDESNKDNKYVRNDIRNRIIPAIDENNQLKVSHLLKLKQWHDEQYDILQYSAKQFIQEFVKFDEQSKYLEVSRQAFNNLPNSLKMVVLDCLLSKYYELFNISAKTYEEWFKQFSSKKAQFSINLTDKWIIQIAYGKLIIMAKNNGDTYFRVQTIKKPGNYIFNKYRLEIHSNLPKCLFPLTVRTRQSGDTFKLNGRDGYKKVNRLFIDCKVPQWVRDQMPIVLDKQQRIIAVGDLYQQQTIKKWIIISKNGDE.

19–24 (STGIDS) lines the ATP pocket.

This sequence belongs to the tRNA(Ile)-lysidine synthase family.

The protein localises to the cytoplasm. The catalysed reaction is cytidine(34) in tRNA(Ile2) + L-lysine + ATP = lysidine(34) in tRNA(Ile2) + AMP + diphosphate + H(+). Its function is as follows. Ligates lysine onto the cytidine present at position 34 of the AUA codon-specific tRNA(Ile) that contains the anticodon CAU, in an ATP-dependent manner. Cytidine is converted to lysidine, thus changing the amino acid specificity of the tRNA from methionine to isoleucine. This chain is tRNA(Ile)-lysidine synthase, found in Staphylococcus aureus (strain COL).